Reading from the N-terminus, the 113-residue chain is Large ribosomal subunit protein uL24 (113 aa).

It belongs to the universal ribosomal protein uL24 family. As to quaternary structure, part of the 50S ribosomal subunit.

One of two assembly initiator proteins, it binds directly to the 5'-end of the 23S rRNA, where it nucleates assembly of the 50S subunit. Its function is as follows. One of the proteins that surrounds the polypeptide exit tunnel on the outside of the subunit. This Micrococcus luteus (Micrococcus lysodeikticus) protein is Large ribosomal subunit protein uL24.